We begin with the raw amino-acid sequence, 304 residues long: Phosphatidylserine decarboxylase proenzyme (304 aa).

Active-site charge relay system; for autoendoproteolytic cleavage activity residues include D90, H147, and S253. S253 serves as the catalytic Schiff-base intermediate with substrate; via pyruvic acid; for decarboxylase activity. Position 253 is a pyruvic acid (Ser); by autocatalysis (S253).

This sequence belongs to the phosphatidylserine decarboxylase family. PSD-B subfamily. Prokaryotic type I sub-subfamily. Heterodimer of a large membrane-associated beta subunit and a small pyruvoyl-containing alpha subunit. The cofactor is pyruvate. Post-translationally, is synthesized initially as an inactive proenzyme. Formation of the active enzyme involves a self-maturation process in which the active site pyruvoyl group is generated from an internal serine residue via an autocatalytic post-translational modification. Two non-identical subunits are generated from the proenzyme in this reaction, and the pyruvate is formed at the N-terminus of the alpha chain, which is derived from the carboxyl end of the proenzyme. The autoendoproteolytic cleavage occurs by a canonical serine protease mechanism, in which the side chain hydroxyl group of the serine supplies its oxygen atom to form the C-terminus of the beta chain, while the remainder of the serine residue undergoes an oxidative deamination to produce ammonia and the pyruvoyl prosthetic group on the alpha chain. During this reaction, the Ser that is part of the protease active site of the proenzyme becomes the pyruvoyl prosthetic group, which constitutes an essential element of the active site of the mature decarboxylase.

It is found in the cell membrane. The catalysed reaction is a 1,2-diacyl-sn-glycero-3-phospho-L-serine + H(+) = a 1,2-diacyl-sn-glycero-3-phosphoethanolamine + CO2. It participates in phospholipid metabolism; phosphatidylethanolamine biosynthesis; phosphatidylethanolamine from CDP-diacylglycerol: step 2/2. Catalyzes the formation of phosphatidylethanolamine (PtdEtn) from phosphatidylserine (PtdSer). This Dickeya dadantii (strain 3937) (Erwinia chrysanthemi (strain 3937)) protein is Phosphatidylserine decarboxylase proenzyme.